Consider the following 314-residue polypeptide: Vacuolar membrane protein SCRG_03194 (314 aa).

Positions 32–60 are disordered; the sequence is KPTSSVVSETSSKSLPSLTSSAFSTSSGA. The helical transmembrane segment at 93–113 threads the bilayer; that stretch reads VYIAVGAVIGAIFISILIWWL. A phosphoserine mark is found at Ser-148, Ser-254, and Ser-274. Residues 240 to 309 form a disordered region; sequence EERKLNLNRP…PSMFLDDVLN (70 aa). Over residues 254–269 the composition is skewed to basic and acidic residues; the sequence is SPERKEKKINSMEGYH.

It belongs to the PRM5 family.

Its subcellular location is the vacuole membrane. This is Vacuolar membrane protein SCRG_03194 from Saccharomyces cerevisiae (strain RM11-1a) (Baker's yeast).